A 305-amino-acid polypeptide reads, in one-letter code: Dermonecrotic toxin LiSicTox-alphaII1 (305 aa).

Residues 1–18 (MLLHIALILGCWSVFSEG) form the signal peptide. Positions 19 to 26 (AETDVAER) are excised as a propeptide. His38 is an active-site residue. Mg(2+) is bound by residues Glu58 and Asp60. His74 functions as the Nucleophile in the catalytic mechanism. 2 disulfide bridges follow: Cys78–Cys84 and Cys80–Cys223. Asp118 serves as a coordination point for Mg(2+).

The protein belongs to the arthropod phospholipase D family. Class II subfamily. Class IIa sub-subfamily. The cofactor is Mg(2+). Expressed by the venom gland.

Its subcellular location is the secreted. It catalyses the reaction an N-(acyl)-sphingosylphosphocholine = an N-(acyl)-sphingosyl-1,3-cyclic phosphate + choline. The enzyme catalyses an N-(acyl)-sphingosylphosphoethanolamine = an N-(acyl)-sphingosyl-1,3-cyclic phosphate + ethanolamine. It carries out the reaction a 1-acyl-sn-glycero-3-phosphocholine = a 1-acyl-sn-glycero-2,3-cyclic phosphate + choline. The catalysed reaction is a 1-acyl-sn-glycero-3-phosphoethanolamine = a 1-acyl-sn-glycero-2,3-cyclic phosphate + ethanolamine. Dermonecrotic toxins cleave the phosphodiester linkage between the phosphate and headgroup of certain phospholipids (sphingolipid and lysolipid substrates), forming an alcohol (often choline) and a cyclic phosphate. This toxin acts on sphingomyelin (SM) wih high activity. It may also act on ceramide phosphoethanolamine (CPE), lysophosphatidylcholine (LPC) and lysophosphatidylethanolamine (LPE), but not on lysophosphatidylserine (LPS), and lysophosphatidylglycerol (LPG). It acts by transphosphatidylation, releasing exclusively cyclic phosphate products as second products. Shows high hemolytic activity. Causes dermonecrosis, induces inflammatory response, platelet aggregation and increases vessel permeability. Shows no lethality when injected at higher dose into mice. May cause complement-dependent hemolysis as well as in a complement-independent manner. The hemolysis provoked in a complement-independent manner may be composed of several steps. The toxin may bind to erythrocyte membranes, may hydrolyze membrane phospholipids (SM and LPC) thus generating metabolism products that may cause hemolysis, probably by provoking an increase of calcium inside cells. The calcium influx may be due to the opening of L-type calcium channels, since L-type calcium channel blockers inhibit calcium influx. The sequence is that of Dermonecrotic toxin LiSicTox-alphaII1 from Loxosceles intermedia (Brown spider).